The primary structure comprises 61 residues: Small ribosomal subunit protein uS14 (61 aa).

Residues Cys-24, Cys-27, Cys-40, and Cys-43 each contribute to the Zn(2+) site.

Belongs to the universal ribosomal protein uS14 family. Zinc-binding uS14 subfamily. Part of the 30S ribosomal subunit. Contacts proteins S3 and S10. It depends on Zn(2+) as a cofactor.

Binds 16S rRNA, required for the assembly of 30S particles and may also be responsible for determining the conformation of the 16S rRNA at the A site. This chain is Small ribosomal subunit protein uS14, found in Thermoanaerobacter sp. (strain X514).